A 560-amino-acid polypeptide reads, in one-letter code: Zinc finger protein 619 (560 aa).

10 consecutive C2H2-type zinc fingers follow at residues 188–210 (YKCG…QRVH), 216–238 (YTCK…QKIH), 244–266 (YSCE…QKLH), 272–294 (YECT…QRIH), 300–322 (FKCK…ERIH), 328–350 (YECK…QRIH), 356–378 (YECK…QRFH), 384–406 (YKCN…QRIH), 412–434 (YECQ…QRVH), and 440–462 (YECK…QKWH).

It belongs to the krueppel C2H2-type zinc-finger protein family.

The protein resides in the nucleus. Functionally, may be involved in transcriptional regulation. This chain is Zinc finger protein 619 (ZNF619), found in Homo sapiens (Human).